Reading from the N-terminus, the 508-residue chain is Histidine ammonia-lyase (508 aa).

The 5-imidazolinone (Ala-Gly) cross-link spans Ala-143–Gly-145. A 2,3-didehydroalanine (Ser) modification is found at Ser-144.

Belongs to the PAL/histidase family. Contains an active site 4-methylidene-imidazol-5-one (MIO), which is formed autocatalytically by cyclization and dehydration of residues Ala-Ser-Gly.

Its subcellular location is the cytoplasm. The catalysed reaction is L-histidine = trans-urocanate + NH4(+). It participates in amino-acid degradation; L-histidine degradation into L-glutamate; N-formimidoyl-L-glutamate from L-histidine: step 1/3. The polypeptide is Histidine ammonia-lyase (Caldanaerobacter subterraneus subsp. tengcongensis (strain DSM 15242 / JCM 11007 / NBRC 100824 / MB4) (Thermoanaerobacter tengcongensis)).